A 136-amino-acid chain; its full sequence is Small ribosomal subunit protein uS9 (136 aa).

The protein belongs to the universal ribosomal protein uS9 family.

In Borreliella burgdorferi (strain ZS7) (Borrelia burgdorferi), this protein is Small ribosomal subunit protein uS9.